The following is a 249-amino-acid chain: Type III pantothenate kinase (249 aa).

6 to 13 (DCGNSFIK) is an ATP binding site. Substrate contacts are provided by residues Y93 and 100-103 (GLDR). Catalysis depends on D102, which acts as the Proton acceptor. Residue D122 participates in K(+) binding. ATP is bound at residue T125. T181 is a binding site for substrate.

It belongs to the type III pantothenate kinase family. Homodimer. It depends on NH4(+) as a cofactor. The cofactor is K(+).

It localises to the cytoplasm. It carries out the reaction (R)-pantothenate + ATP = (R)-4'-phosphopantothenate + ADP + H(+). The protein operates within cofactor biosynthesis; coenzyme A biosynthesis; CoA from (R)-pantothenate: step 1/5. Functionally, catalyzes the phosphorylation of pantothenate (Pan), the first step in CoA biosynthesis. In Pseudomonas fluorescens (strain Pf0-1), this protein is Type III pantothenate kinase.